The chain runs to 262 residues: Global transcriptional regulator CodY (262 aa).

A GAF domain region spans residues 1-159; it reads MAHLLEKTRK…ASTVVGIQLL (159 aa). A DNA-binding region (H-T-H motif) is located at residues 207 to 226; sequence ASVIADRIGITRSVIVNALR.

The protein belongs to the CodY family.

The protein resides in the cytoplasm. Its function is as follows. DNA-binding global transcriptional regulator which is involved in the adaptive response to starvation and acts by directly or indirectly controlling the expression of numerous genes in response to nutrient availability. During rapid exponential growth, CodY is highly active and represses genes whose products allow adaptation to nutrient depletion. In Streptococcus pneumoniae (strain ATCC BAA-255 / R6), this protein is Global transcriptional regulator CodY.